The primary structure comprises 699 residues: Integrator complex subunit 10 (699 aa).

Ser-220 and Ser-370 each carry phosphoserine. Lys-453 participates in a covalent cross-link: Glycyl lysine isopeptide (Lys-Gly) (interchain with G-Cter in SUMO2).

It belongs to the Integrator subunit 10 family. Component of the Integrator complex, composed of core subunits INTS1, INTS2, INTS3, INTS4, INTS5, INTS6, INTS7, INTS8, INTS9/RC74, INTS10, INTS11/CPSF3L, INTS12, INTS13, INTS14 and INTS15. The core complex associates with protein phosphatase 2A subunits PPP2CA and PPP2R1A, to form the Integrator-PP2A (INTAC) complex. INTS10 is part of the tail subcomplex, composed of INTS10, INTS13, INTS14 and INTS15.

It is found in the nucleus. Component of the integrator complex, a multiprotein complex that terminates RNA polymerase II (Pol II) transcription in the promoter-proximal region of genes. The integrator complex provides a quality checkpoint during transcription elongation by driving premature transcription termination of transcripts that are unfavorably configured for transcriptional elongation: the complex terminates transcription by (1) catalyzing dephosphorylation of the C-terminal domain (CTD) of Pol II subunit POLR2A/RPB1 and SUPT5H/SPT5, (2) degrading the exiting nascent RNA transcript via endonuclease activity and (3) promoting the release of Pol II from bound DNA. The integrator complex is also involved in terminating the synthesis of non-coding Pol II transcripts, such as enhancer RNAs (eRNAs), small nuclear RNAs (snRNAs), telomerase RNAs and long non-coding RNAs (lncRNAs). Within the integrator complex, INTS10 is part of the integrator tail module that acts as a platform for the recruitment of transcription factors at promoters. May be not involved in the recruitment of cytoplasmic dynein to the nuclear envelope, probably as component of the integrator complex. The polypeptide is Integrator complex subunit 10 (INTS10) (Macaca fascicularis (Crab-eating macaque)).